We begin with the raw amino-acid sequence, 282 residues long: NH(3)-dependent NAD(+) synthetase (282 aa).

An ATP-binding site is contributed by 51-58; that stretch reads GISGGVDS. Mg(2+) is bound at residue aspartate 57. Arginine 148 lines the deamido-NAD(+) pocket. Position 168 (threonine 168) interacts with ATP. Glutamate 173 lines the Mg(2+) pocket. Deamido-NAD(+)-binding residues include lysine 181 and aspartate 188. Lysine 197 and threonine 219 together coordinate ATP. Residue 268-269 coordinates deamido-NAD(+); sequence HK.

The protein belongs to the NAD synthetase family. As to quaternary structure, homodimer.

It carries out the reaction deamido-NAD(+) + NH4(+) + ATP = AMP + diphosphate + NAD(+) + H(+). The protein operates within cofactor biosynthesis; NAD(+) biosynthesis; NAD(+) from deamido-NAD(+) (ammonia route): step 1/1. Catalyzes the ATP-dependent amidation of deamido-NAD to form NAD. Uses ammonia as a nitrogen source. In Burkholderia lata (strain ATCC 17760 / DSM 23089 / LMG 22485 / NCIMB 9086 / R18194 / 383), this protein is NH(3)-dependent NAD(+) synthetase.